A 286-amino-acid chain; its full sequence is Beta-lactamase SHV-29 (286 aa).

The N-terminal stretch at 1 to 21 (MRYIRLCIISLLATLPLAVHA) is a signal peptide. S66 functions as the Acyl-ester intermediate in the catalytic mechanism. Cysteines 73 and 119 form a disulfide. Residue E164 is the Proton acceptor of the active site. Substrate is bound at residue 230–232 (KTG).

It belongs to the class-A beta-lactamase family.

It catalyses the reaction a beta-lactam + H2O = a substituted beta-amino acid. The chain is Beta-lactamase SHV-29 (bla) from Klebsiella pneumoniae.